We begin with the raw amino-acid sequence, 530 residues long: Feruloyl esterase C (530 aa).

A signal peptide spans 1–25 (MMLTSAILLLTLGVQLSHADDSSRE). Intrachain disulfides connect Cys-31/Cys-78, Cys-66/Cys-117, Cys-190/Cys-444, Cys-259/Cys-276, Cys-285/Cys-294, and Cys-506/Cys-528. The active-site Acyl-ester intermediate is Ser-191. Residues Asp-260, Asp-263, Ala-265, Asp-267, and Val-269 each contribute to the Ca(2+) site. Active-site charge relay system residues include Asp-403 and His-443.

The protein belongs to the tannase family.

Its subcellular location is the secreted. It carries out the reaction feruloyl-polysaccharide + H2O = ferulate + polysaccharide.. Functionally, involved in degradation of plant cell walls. Hydrolyzes the feruloyl-arabinose ester bond in arabinoxylans as well as the feruloyl-galactose and feruloyl-arabinose ester bonds in pectin. Active against methyl esters of sinapate (MSA) and caffeate (MCA). The polypeptide is Feruloyl esterase C (faeC) (Talaromyces stipitatus (strain ATCC 10500 / CBS 375.48 / QM 6759 / NRRL 1006) (Penicillium stipitatum)).